Reading from the N-terminus, the 485-residue chain is MKEESILKKCDSSSIKHVPSTPLETNCPDKYNPKTWPIRLKVRNVIVISSMTFLNQYGDSVFAPSISNIAEQFHASRTLVTLGATLYTLGILFGNLIFAPLSEQFGRRPIYLIGYSVFALLQIPIALSVNLAMFLVFRFFSGLFGSVGLSNGSGSLADLFEKKDRGKYMVIYFTVLSIGPGIAPIISGFISQSSIGWQWEFWILLILSGFNLFWAFLLLKETYPPVLNRKKFEKYGEIGENEPVALRLTGKQLLIKLLILLSMKKPISILLSQPILICVACTIGSIYGMINLVLIAFSEVWKSSYDFSPGISGLMYISITLGLFSAVFIAMPINQKFYSYLVKRNGGEGEPEFRLPMGFIGITLFEIGILLFGWTARYKIFWFVPTIGSAIMGGGYIMTSNPLNMYVVDSYGIYSASASAGVKIFQLLLGAIFPLFAESLFRRLNYGWGCTLLAFILLACGCSLPILFKYGKQIRNLRPFDPSKY.

11 helical membrane-spanning segments follow: residues 79-99 (LVTL…LIFA), 117-137 (VFAL…FLVF), 139-159 (FFSG…LADL), 170-190 (VIYF…SGFI), 199-219 (WEFW…FLLL), 275-295 (ILIC…LVLI), 313-333 (GLMY…AMPI), 355-375 (LPMG…FGWT), 380-400 (IFWF…IMTS), 421-441 (GVKI…ESLF), and 448-468 (WGCT…PILF).

Belongs to the major facilitator superfamily. CAR1 family.

The protein localises to the golgi apparatus. It localises to the membrane. This is an uncharacterized protein from Schizosaccharomyces pombe (strain 972 / ATCC 24843) (Fission yeast).